Reading from the N-terminus, the 295-residue chain is Ribosomal RNA small subunit methyltransferase A (295 aa).

The S-adenosyl-L-methionine site is built by Asn31, Leu33, Gly58, Glu79, Asp104, and Asn129.

The protein belongs to the class I-like SAM-binding methyltransferase superfamily. rRNA adenine N(6)-methyltransferase family. RsmA subfamily.

It is found in the cytoplasm. The catalysed reaction is adenosine(1518)/adenosine(1519) in 16S rRNA + 4 S-adenosyl-L-methionine = N(6)-dimethyladenosine(1518)/N(6)-dimethyladenosine(1519) in 16S rRNA + 4 S-adenosyl-L-homocysteine + 4 H(+). Specifically dimethylates two adjacent adenosines (A1518 and A1519) in the loop of a conserved hairpin near the 3'-end of 16S rRNA in the 30S particle. May play a critical role in biogenesis of 30S subunits. This Leuconostoc citreum (strain KM20) protein is Ribosomal RNA small subunit methyltransferase A.